Here is a 288-residue protein sequence, read N- to C-terminus: N-acetylneuraminate lyase (288 aa).

Positions 44 and 45 each coordinate aceneuramate. Y133 (proton donor) is an active-site residue. Residue K161 is the Schiff-base intermediate with substrate of the active site. Residues T163, G185, D187, E188, and S204 each contribute to the aceneuramate site.

The protein belongs to the DapA family. NanA subfamily. Homotetramer.

It localises to the cytoplasm. It catalyses the reaction aceneuramate = aldehydo-N-acetyl-D-mannosamine + pyruvate. Its pathway is amino-sugar metabolism; N-acetylneuraminate degradation; D-fructose 6-phosphate from N-acetylneuraminate: step 1/5. Its function is as follows. Catalyzes the reversible aldol cleavage of N-acetylneuraminic acid (sialic acid; Neu5Ac) to form pyruvate and N-acetylmannosamine (ManNAc) via a Schiff base intermediate. In Clostridium perfringens (strain ATCC 13124 / DSM 756 / JCM 1290 / NCIMB 6125 / NCTC 8237 / Type A), this protein is N-acetylneuraminate lyase.